We begin with the raw amino-acid sequence, 408 residues long: Bone morphogenetic protein 4 (408 aa).

The signal sequence occupies residues 1-19 (MIPGNRMLMVVLLCQVLLG). Residues 20–292 (GATDASLIPE…HTLTRRRAKR (273 aa)) constitute a propeptide that is removed on maturation. S91 is subject to Phosphoserine. Residues 91-113 (SGEEEEEEQSQGTGLEYPERPAS) form a disordered region. N-linked (GlcNAc...) asparagine glycans are attached at residues N144 and N209. A disordered region spans residues 281–307 (RGHTLTRRRAKRSPKHHPQRSRKKNKN). The span at 284–307 (TLTRRRAKRSPKHHPQRSRKKNKN) shows a compositional bias: basic residues. 3 disulfides stabilise this stretch: C308-C373, C337-C405, and C341-C407. N-linked (GlcNAc...) asparagine glycans are attached at residues N350 and N365.

Belongs to the TGF-beta family. As to quaternary structure, homodimer; disulfide-linked. Interacts with GREM2. Part of a complex consisting of TWSG1 and CHRD. Interacts with the serine proteases, HTRA1 and HTRA3; the interaction with either inhibits BMP4-mediated signaling. The HTRA protease activity is required for this inhibition. Interacts with SOSTDC1. Interacts with FBN1 (via N-terminal domain) and FBN2. Interacts with type I receptor BMPR1A. Interacts with type II receptor BMPR2. Interacts with FSTL1; this interaction inhibits the activation of the BMP4/Smad1/5/8 signaling pathway. Interacts with SCUBE3. Interacts with TGFBR3.

It is found in the secreted. The protein localises to the extracellular space. Its subcellular location is the extracellular matrix. Its function is as follows. Growth factor of the TGF-beta superfamily that plays essential roles in many developmental processes, including neurogenesis, vascular development, angiogenesis and osteogenesis. Acts in concert with PTHLH/PTHRP to stimulate ductal outgrowth during embryonic mammary development and to inhibit hair follicle induction. Initiates the canonical BMP signaling cascade by associating with type I receptor BMPR1A and type II receptor BMPR2. Once all three components are bound together in a complex at the cell surface, BMPR2 phosphorylates and activates BMPR1A. In turn, BMPR1A propagates signal by phosphorylating SMAD1/5/8 that travel to the nucleus and act as activators and repressors of transcription of target genes. Positively regulates the expression of odontogenic development regulator MSX1 via inducing the IPO7-mediated import of SMAD1 to the nucleus. Required for MSX1-mediated mesenchymal molar tooth bud development beyond the bud stage, via promoting Wnt signaling. Acts as a positive regulator of odontoblast differentiation during mesenchymal tooth germ formation, expression is repressed during the bell stage by MSX1-mediated inhibition of CTNNB1 signaling. Able to induce its own expression in dental mesenchymal cells and also in the neighboring dental epithelial cells via an MSX1-mediated pathway. Can also signal through non-canonical BMP pathways such as ERK/MAP kinase, PI3K/Akt, or SRC cascades. For example, induces SRC phosphorylation which, in turn, activates VEGFR2, leading to an angiogenic response. This is Bone morphogenetic protein 4 from Rattus norvegicus (Rat).